Consider the following 568-residue polypeptide: Sulfite reductase [NADPH] hemoprotein beta-component (568 aa).

The [4Fe-4S] cluster site is built by Cys425, Cys431, Cys470, and Cys474. Cys474 contacts siroheme.

Belongs to the nitrite and sulfite reductase 4Fe-4S domain family. Alpha(8)-beta(8). The alpha component is a flavoprotein, the beta component is a hemoprotein. The cofactor is siroheme. [4Fe-4S] cluster serves as cofactor.

It carries out the reaction hydrogen sulfide + 3 NADP(+) + 3 H2O = sulfite + 3 NADPH + 4 H(+). Its pathway is sulfur metabolism; hydrogen sulfide biosynthesis; hydrogen sulfide from sulfite (NADPH route): step 1/1. In terms of biological role, component of the sulfite reductase complex that catalyzes the 6-electron reduction of sulfite to sulfide. This is one of several activities required for the biosynthesis of L-cysteine from sulfate. This is Sulfite reductase [NADPH] hemoprotein beta-component from Xanthomonas campestris pv. campestris (strain ATCC 33913 / DSM 3586 / NCPPB 528 / LMG 568 / P 25).